Reading from the N-terminus, the 173-residue chain is Large ribosomal subunit protein bL9 (173 aa).

This sequence belongs to the bacterial ribosomal protein bL9 family.

Functionally, binds to the 23S rRNA. The sequence is that of Large ribosomal subunit protein bL9 from Chlamydia felis (strain Fe/C-56) (Chlamydophila felis).